The primary structure comprises 156 residues: Jun dimerization protein 2 (156 aa).

Positions 56–95 (KRPFDAIKSEDDDDDERKKRRREKNKVAAARCRNRKKERT) are disordered. The 64-residue stretch at 70-133 (DERKKRRREK…QQLIVMLNLH (64 aa)) folds into the bZIP domain. Positions 72 to 94 (RKKRRREKNKVAAARCRNRKKER) are basic motif. The tract at residues 98-126 (LQKESERLEMLNSDLKSQIEELKSERQQL) is leucine-zipper.

This sequence belongs to the bZIP family. ATF subfamily.

Its subcellular location is the nucleus. In terms of biological role, component of the AP-1 transcription factor that represses transactivation mediated by the Jun family of proteins. The sequence is that of Jun dimerization protein 2 (jdp2) from Danio rerio (Zebrafish).